The sequence spans 876 residues: Alanine--tRNA ligase (876 aa).

Zn(2+)-binding residues include histidine 565, histidine 569, cysteine 667, and histidine 671.

This sequence belongs to the class-II aminoacyl-tRNA synthetase family. Requires Zn(2+) as cofactor.

It localises to the cytoplasm. The enzyme catalyses tRNA(Ala) + L-alanine + ATP = L-alanyl-tRNA(Ala) + AMP + diphosphate. In terms of biological role, catalyzes the attachment of alanine to tRNA(Ala) in a two-step reaction: alanine is first activated by ATP to form Ala-AMP and then transferred to the acceptor end of tRNA(Ala). Also edits incorrectly charged Ser-tRNA(Ala) and Gly-tRNA(Ala) via its editing domain. The sequence is that of Alanine--tRNA ligase from Staphylococcus aureus (strain MRSA252).